The sequence spans 258 residues: Ureidoacrylate amidohydrolase RutB (258 aa).

The disordered stretch occupies residues 1–23 (MDRPTTYPMDQPAGFRDAQGRHG). The active-site Proton acceptor is Asp47. The active site involves Lys156. Cys189 (nucleophile) is an active-site residue.

Belongs to the isochorismatase family. RutB subfamily.

The enzyme catalyses (Z)-3-ureidoacrylate + H2O + H(+) = (Z)-3-aminoacrylate + NH4(+) + CO2. It carries out the reaction (Z)-3-ureidoacrylate + H2O = (Z)-3-aminoacrylate + carbamate + H(+). It catalyses the reaction (Z)-2-methylureidoacrylate + H2O + H(+) = (Z)-2-methylaminoacrylate + NH4(+) + CO2. Functionally, hydrolyzes ureidoacrylate to form aminoacrylate and carbamate. The carbamate hydrolyzes spontaneously, thereby releasing one of the nitrogen atoms of the pyrimidine ring as ammonia and one of its carbon atoms as CO2. This is Ureidoacrylate amidohydrolase RutB from Methylobacterium radiotolerans (strain ATCC 27329 / DSM 1819 / JCM 2831 / NBRC 15690 / NCIMB 10815 / 0-1).